An 83-amino-acid polypeptide reads, in one-letter code: Small ribosomal subunit protein eS21 (83 aa).

This sequence belongs to the eukaryotic ribosomal protein eS21 family. Component of the 40S small ribosomal subunit. Interacts with sta.

Its subcellular location is the cytoplasm. The protein localises to the cytosol. It is found in the rough endoplasmic reticulum. May be an associated component of the ribosome rather than a core structural subunit. May act as a translation initiation factor. Has a role in regulation of cell proliferation in the hematopoietic organs and the imaginal disks of larva. The polypeptide is Small ribosomal subunit protein eS21 (RpS21) (Drosophila simulans (Fruit fly)).